A 285-amino-acid chain; its full sequence is Probable endonuclease 4 (285 aa).

The Zn(2+) site is built by histidine 69, histidine 109, glutamate 145, aspartate 179, histidine 182, histidine 216, aspartate 229, histidine 231, and glutamate 261.

Belongs to the AP endonuclease 2 family. It depends on Zn(2+) as a cofactor.

It catalyses the reaction Endonucleolytic cleavage to 5'-phosphooligonucleotide end-products.. Endonuclease IV plays a role in DNA repair. It cleaves phosphodiester bonds at apurinic or apyrimidinic (AP) sites, generating a 3'-hydroxyl group and a 5'-terminal sugar phosphate. The chain is Probable endonuclease 4 from Shigella sonnei (strain Ss046).